The chain runs to 117 residues: Large ribosomal subunit protein bL20c (117 aa).

It belongs to the bacterial ribosomal protein bL20 family.

It localises to the plastid. The protein localises to the chloroplast. Its function is as follows. Binds directly to 23S ribosomal RNA and is necessary for the in vitro assembly process of the 50S ribosomal subunit. It is not involved in the protein synthesizing functions of that subunit. The protein is Large ribosomal subunit protein bL20c of Lemna minor (Common duckweed).